Reading from the N-terminus, the 534-residue chain is Dolichol kinase (534 aa).

Residues 1–16 (MTRQCPPQESGAALSG) lie on the Cytoplasmic side of the membrane. Residues 17–37 (SVLAEAAVVFAVVLSIHAAVW) form a helical membrane-spanning segment. The Extracellular portion of the chain corresponds to 38–72 (DRYSWCAVALAVQAFYVQYKWDRLLQQGNAVFQFR). A helical membrane pass occupies residues 73–93 (MSANSGLLPASMVMPLLGLVM). Residues 94–109 (KERCQTAGNPYFERFG) are Cytoplasmic-facing. A helical membrane pass occupies residues 110 to 130 (IVVAATGMAVALFSSVLALGI). The Extracellular segment spans residues 131–132 (TR). A helical membrane pass occupies residues 133 to 153 (PVPTNTCAISGLAGGVIIYIM). Residues 154 to 161 (RHSLSVGE) lie on the Cytoplasmic side of the membrane. The chain crosses the membrane as a helical span at residues 162–182 (VIEVLEVLLIFVYLNMILLYL). The Extracellular portion of the chain corresponds to 183–186 (LPRC). A helical membrane pass occupies residues 187–207 (FTPGEALLVLGGISFVLNQLI). At 208-220 (KRSLTESQGDPVD) the chain is on the cytoplasmic side. The chain crosses the membrane as a helical span at residues 221–241 (FFLLVVVVGMVLMGVFFSTLF). Over 242-252 (VFMDSGTWASS) the chain is Extracellular. Residues 253 to 273 (IFFHLMTCVLGLGVVLPWLHW) traverse the membrane as a helical segment. Topologically, residues 274–293 (LIRRNPLLWLLQFLFYTETR) are cytoplasmic. Residues 294 to 314 (IYLLAYWSLLASVACLVVLYQ) traverse the membrane as a helical segment. Residues 315–333 (NAKRSSSESKKHRAPTITR) are Extracellular-facing. Residues 334 to 350 (KYFHFIVVATYIPGIIF) form a helical membrane-spanning segment. Residues 351–355 (DRPLL) are Cytoplasmic-facing. A helical transmembrane segment spans residues 356 to 376 (YVAATVCLAVFIFLEYVRYFR). Residues 377 to 397 (IKPLGHTLRSLLSLFLDERDS) lie on the Extracellular side of the membrane. Residues 398–418 (GPLILTHIYLLLGMSLPIWLI) traverse the membrane as a helical segment. Residues 419–432 (PRPCTQKDSLEGAR) are Cytoplasmic-facing. A helical transmembrane segment spans residues 433–453 (ALVPYAGVLAVGVGDTVASIF). Residues 454 to 468 (GSTMGEIRWPGTKKT) are Extracellular-facing. A CTP-binding region spans residues 455 to 470 (STMGEIRWPGTKKTFE). A helical transmembrane segment spans residues 469–489 (FEGTMTSIFAQIISVALILIF). Residues 490–491 (DS) are Cytoplasmic-facing. The chain crosses the membrane as a helical span at residues 492–512 (GVDLNYSYAWILGSISTVSLL). Topologically, residues 513 to 534 (EAYTTQIDNLLLPLYLLILLMA) are extracellular.

Belongs to the polyprenol kinase family.

It localises to the endoplasmic reticulum membrane. It catalyses the reaction a di-trans,poly-cis-dolichol + CTP = a di-trans,poly-cis-dolichyl phosphate + CDP + H(+). It participates in protein modification; protein glycosylation. Catalyzes CTP-mediated phosphorylation of dolichol, the terminal step in de novo dolichyl monophosphate (Dol-P) biosynthesis. Dol-P is a lipid carrier essential for the synthesis of N-linked and O-linked oligosaccharides and for GPI anchors. In Mus musculus (Mouse), this protein is Dolichol kinase.